Here is an 83-residue protein sequence, read N- to C-terminus: Small ribosomal subunit protein eS21 (83 aa).

Belongs to the eukaryotic ribosomal protein eS21 family. As to quaternary structure, component of the 40S small ribosomal subunit.

The protein localises to the cytoplasm. It localises to the cytosol. The protein resides in the rough endoplasmic reticulum. The polypeptide is Small ribosomal subunit protein eS21 (RpS21) (Ixodes scapularis (Black-legged tick)).